The sequence spans 317 residues: UV DNA damage endonuclease (317 aa).

Belongs to the uve1/UvsE family.

In terms of biological role, component in a DNA repair pathway. Removal of UV LIGHT damaged nucleotides. Recognizes pyrimidine dimers and cleave a phosphodiester bond immediately 5' to the lesion. The chain is UV DNA damage endonuclease from Bacillus cereus (strain G9842).